Reading from the N-terminus, the 564-residue chain is Glutamyl-tRNA(Gln) amidotransferase subunit B, mitochondrial (564 aa).

A mitochondrion-targeting transit peptide spans 1–88 (MIRQCVSHRG…DTDAKLFSRA (88 aa)). A disordered region spans residues 26 to 63 (PFHHPSPRPLGRKNWSTSDEAKSKRAAMRKGGAPPPEH).

This sequence belongs to the GatB/GatE family. GatB subfamily. As to quaternary structure, subunit of the heterotrimeric GatCAB amidotransferase (AdT) complex, composed of A, B and C subunits.

It is found in the mitochondrion. The catalysed reaction is L-glutamyl-tRNA(Gln) + L-glutamine + ATP + H2O = L-glutaminyl-tRNA(Gln) + L-glutamate + ADP + phosphate + H(+). Allows the formation of correctly charged Gln-tRNA(Gln) through the transamidation of misacylated Glu-tRNA(Gln) in the mitochondria. The reaction takes place in the presence of glutamine and ATP through an activated gamma-phospho-Glu-tRNA(Gln). This Ajellomyces capsulatus (strain G186AR / H82 / ATCC MYA-2454 / RMSCC 2432) (Darling's disease fungus) protein is Glutamyl-tRNA(Gln) amidotransferase subunit B, mitochondrial.